The following is an 87-amino-acid chain: Translation initiation factor IF-1 2 (87 aa).

The S1-like domain occupies 1–72 (MAKEELLEMQ…SKGRITFRHI (72 aa)).

Belongs to the IF-1 family. Component of the 30S ribosomal translation pre-initiation complex which assembles on the 30S ribosome in the order IF-2 and IF-3, IF-1 and N-formylmethionyl-tRNA(fMet); mRNA recruitment can occur at any time during PIC assembly.

Its subcellular location is the cytoplasm. Functionally, one of the essential components for the initiation of protein synthesis. Stabilizes the binding of IF-2 and IF-3 on the 30S subunit to which N-formylmethionyl-tRNA(fMet) subsequently binds. Helps modulate mRNA selection, yielding the 30S pre-initiation complex (PIC). Upon addition of the 50S ribosomal subunit IF-1, IF-2 and IF-3 are released leaving the mature 70S translation initiation complex. The sequence is that of Translation initiation factor IF-1 2 from Dechloromonas aromatica (strain RCB).